A 616-amino-acid polypeptide reads, in one-letter code: Xaa-Pro aminopeptidase app-1 (616 aa).

Arg78 and His392 together coordinate a peptide. Positions 413, 424, and 487 each coordinate Zn(2+). His487, His496, and Glu522 together coordinate a peptide. Zn(2+) is bound by residues Glu522 and Glu536.

The protein belongs to the peptidase M24B family. As to quaternary structure, homodimer. May interact with pid-2, pid-4 and pid-5. Zn(2+) is required as a cofactor. Specifically expressed in the intestine.

The protein localises to the cytoplasm. The catalysed reaction is Release of any N-terminal amino acid, including proline, that is linked to proline, even from a dipeptide or tripeptide.. With respect to regulation, strongly inhibited by the metal ion chelators EDTA and 1,10-phenanthroline. Also inhibited by apstatin. Activity towards bradykinin is inhibited by Mn(2+) and Zn(2+) at all concentrations tested, whereas Co(2+) is inhibitory at concentrations above 100 uM and activatory at 10 uM. Functionally, catalyzes the removal of a penultimate prolyl residue from the N-termini of peptides, such as Arg-Pro-Pro. Has activity towards the flp-9 neuropeptide KPSFVRF-amide. In Caenorhabditis elegans, this protein is Xaa-Pro aminopeptidase app-1.